The sequence spans 169 residues: NAD(P)H-quinone oxidoreductase subunit 6, chloroplastic (169 aa).

The next 5 membrane-spanning stretches (helical) occupy residues 7–27 (FSSA…IFLP), 29–49 (IVYA…IYVL), 58–78 (AQVL…IMLV), 90–110 (SPPL…VQMI), and 139–159 (LLAF…AIVL).

This sequence belongs to the complex I subunit 6 family. In terms of assembly, NDH is composed of at least 16 different subunits, 5 of which are encoded in the nucleus.

The protein localises to the plastid. It is found in the chloroplast thylakoid membrane. The catalysed reaction is a plastoquinone + NADH + (n+1) H(+)(in) = a plastoquinol + NAD(+) + n H(+)(out). The enzyme catalyses a plastoquinone + NADPH + (n+1) H(+)(in) = a plastoquinol + NADP(+) + n H(+)(out). Its function is as follows. NDH shuttles electrons from NAD(P)H:plastoquinone, via FMN and iron-sulfur (Fe-S) centers, to quinones in the photosynthetic chain and possibly in a chloroplast respiratory chain. The immediate electron acceptor for the enzyme in this species is believed to be plastoquinone. Couples the redox reaction to proton translocation, and thus conserves the redox energy in a proton gradient. In Nephroselmis olivacea (Green alga), this protein is NAD(P)H-quinone oxidoreductase subunit 6, chloroplastic (ndhG).